An 80-amino-acid polypeptide reads, in one-letter code: Acyl carrier protein (80 aa).

Positions 1-76 (MTLEEKIIEI…DVIDYLKVRN (76 aa)) constitute a Carrier domain. S36 carries the post-translational modification O-(pantetheine 4'-phosphoryl)serine.

Belongs to the acyl carrier protein (ACP) family. 4'-phosphopantetheine is transferred from CoA to a specific serine of apo-ACP by AcpS. This modification is essential for activity because fatty acids are bound in thioester linkage to the sulfhydryl of the prosthetic group.

It is found in the cytoplasm. It participates in lipid metabolism; fatty acid biosynthesis. Its function is as follows. Carrier of the growing fatty acid chain in fatty acid biosynthesis. The protein is Acyl carrier protein of Syntrophus aciditrophicus (strain SB).